The chain runs to 513 residues: GTPase Obg (513 aa).

The Obg domain maps to 3–160; sequence THFVDRVVVH…LDLHLEVKTL (158 aa). The OBG-type G domain maps to 161–337; sequence ADVALVGFPS…LSFAMAELVS (177 aa). Residues 167–174, 192–196, 213–216, 289–292, and 318–320 each bind GTP; these read GFPSAGKS, FTTLV, DVPG, NKAD, and SAV. Mg(2+)-binding residues include serine 174 and threonine 194. The OCT domain occupies 355–444; that stretch reads PRAVDDQGFK…ANAVVFDWEP (90 aa). The segment at 457–513 is disordered; that stretch reads GSDLRLEDHSRPTRDEKRLQERERRAAKVTARDELEAERRAGHWTAADEADEELSQR. Residues 458-497 are compositionally biased toward basic and acidic residues; it reads SDLRLEDHSRPTRDEKRLQERERRAAKVTARDELEAERRA. The span at 504–513 shows a compositional bias: acidic residues; it reads DEADEELSQR.

The protein belongs to the TRAFAC class OBG-HflX-like GTPase superfamily. OBG GTPase family. In terms of assembly, monomer. The cofactor is Mg(2+).

Its subcellular location is the cytoplasm. An essential GTPase which binds GTP, GDP and possibly (p)ppGpp with moderate affinity, with high nucleotide exchange rates and a fairly low GTP hydrolysis rate. Plays a role in control of the cell cycle, stress response, ribosome biogenesis and in those bacteria that undergo differentiation, in morphogenesis control. This Kineococcus radiotolerans (strain ATCC BAA-149 / DSM 14245 / SRS30216) protein is GTPase Obg.